We begin with the raw amino-acid sequence, 253 residues long: 2-C-methyl-D-erythritol 4-phosphate cytidylyltransferase (253 aa).

It belongs to the IspD/TarI cytidylyltransferase family. IspD subfamily.

It catalyses the reaction 2-C-methyl-D-erythritol 4-phosphate + CTP + H(+) = 4-CDP-2-C-methyl-D-erythritol + diphosphate. It participates in isoprenoid biosynthesis; isopentenyl diphosphate biosynthesis via DXP pathway; isopentenyl diphosphate from 1-deoxy-D-xylulose 5-phosphate: step 2/6. Catalyzes the formation of 4-diphosphocytidyl-2-C-methyl-D-erythritol from CTP and 2-C-methyl-D-erythritol 4-phosphate (MEP). The sequence is that of 2-C-methyl-D-erythritol 4-phosphate cytidylyltransferase from Idiomarina loihiensis (strain ATCC BAA-735 / DSM 15497 / L2-TR).